The chain runs to 1469 residues: Accumulation-associated protein (1469 aa).

Residues 1 to 52 (MGKRRQGPINKKVDFLPNKLNKYSIRKFTVGTASILLGSTLIFGSSSHEAKA) form the signal peptide. Disordered regions lie at residues 52–164 (AAEE…SEPV), 486–511 (GIET…TPTT), and 528–1443 (EIKP…QANE). Composition is skewed to polar residues over residues 75-94 (ENTN…STLQ) and 110-125 (KANS…SEAP). Positions 129 to 144 (DLARKEDIPAVSKNEE) are enriched in basic and acidic residues. The span at 145-164 (LQSSQPNTDSKIEPTTSEPV) shows a compositional bias: polar residues. 7 consecutive G5 domains span residues 446–528 (PKAV…GGEE), 574–656 (YGPV…GGEE), 702–784 (YGPV…GGEE), 830–912 (YGPV…GGEE), 958–1040 (YGPV…GGEE), 1086–1168 (YGPV…GGEQ), and 1211–1296 (VTKY…GPTK). Positions 489-500 (TTTTPTYVNPNT) are enriched in low complexity. 2 stretches are compositionally biased toward basic and acidic residues: residues 528–537 (EIKPGHKDEF) and 589–613 (PFDK…KGEP). Low complexity predominate over residues 614-629 (GTKTITTPTTKNPLTG). 2 stretches are compositionally biased toward basic and acidic residues: residues 631-646 (KVGE…KQPV) and 655-665 (EEIKPGHKDEF). Low complexity predominate over residues 738 to 757 (KGEPGTKTITTPTTKNPLTG). 2 stretches are compositionally biased toward basic and acidic residues: residues 759-793 (KVGE…KDEF) and 845-869 (PFDK…KGEP). Positions 870–885 (GTKTITTPTTKNPLTG) are enriched in low complexity. Residues 887 to 921 (KVGEGEPTEKVTKQPVDEIVHYGGEEIKPGHKDEF) are compositionally biased toward basic and acidic residues. Positions 994–1013 (KGEPGTKTITTPTTKNPLTG) are enriched in low complexity. Residues 1015–1049 (KVGEGEPTEKITKQPVDEIVHYGGEEIKPGHKDEF) are compositionally biased toward basic and acidic residues. Over residues 1122–1141 (KGEPGTKTITTPTTKNPLTG) the composition is skewed to low complexity. Basic and acidic residues-rich tracts occupy residues 1143–1162 (KVGE…DEIV), 1229–1253 (PFDK…KGEP), and 1271–1286 (KVGE…KQPV). The segment covering 1409 to 1443 (TPTQSGAPEQPNRSMHSTDNKNQLPDTGENRQANE) has biased composition (polar residues). Residues 1432-1436 (LPDTG) carry the LPXTG sorting signal motif. Pentaglycyl murein peptidoglycan amidated threonine is present on T1435. Residues 1436–1469 (GENRQANEGTLVGSLLAIVGSLFIFGRRKKGNEK) constitute a propeptide, removed by sortase.

The protein resides in the secreted. The protein localises to the cell wall. This is Accumulation-associated protein from Staphylococcus epidermidis (strain ATCC 12228 / FDA PCI 1200).